A 23-amino-acid chain; its full sequence is Acidic phospholipase A2 Ts-A5 (23 aa).

Requires Ca(2+) as cofactor. In terms of processing, contains 7 disulfide bonds. As to expression, expressed by the venom gland.

Its subcellular location is the secreted. It carries out the reaction a 1,2-diacyl-sn-glycero-3-phosphocholine + H2O = a 1-acyl-sn-glycero-3-phosphocholine + a fatty acid + H(+). Snake venom phospholipase A2 (PLA2) that shows a moderate inhibition of ADP-induced human platelet aggregation when tested on platelet rich plasma. Exhibits high hydrolytic activities and prefers the anionic micelles (dPPC with deoxycholate) to the zwitterionic micelles (dPPC with Triton X-100). PLA2 catalyzes the calcium-dependent hydrolysis of the 2-acyl groups in 3-sn-phosphoglycerides. This Trimeresurus stejnegeri (Chinese green tree viper) protein is Acidic phospholipase A2 Ts-A5.